Here is a 421-residue protein sequence, read N- to C-terminus: Hemagglutinin-esterase (421 aa).

Residues 1 to 16 form the signal peptide; sequence MFLLPRFILVSCIIGS. Residues 7–127 form an esterase domain 1 region; the sequence is FILVSCIIGS…SNDIWMQNKG (121 aa). Over 17–392 the chain is Virion surface; that stretch reads LGFDNPPTNV…PICVYDPLPL (376 aa). Catalysis depends on S40, which acts as the Nucleophile. The cysteines at positions 44 and 65 are disulfide-linked. 5 N-linked (GlcNAc...) asparagine; by host glycosylation sites follow: N54, N89, N153, N236, and N301. 3 cysteine pairs are disulfide-bonded: C113–C162, C197–C276, and C205–C249. A receptor binding region spans residues 128-266; that stretch reads LFYTQVYKNM…GNYLAISNEL (139 aa). Residues 267 to 379 are esterase domain 2; it reads LLTVPTKAIC…RCPTAADINT (113 aa). Residues C307 and C312 are joined by a disulfide bond. N316 carries an N-linked (GlcNAc...) asparagine; by host glycan. Active-site charge relay system residues include D326 and H329. C347 and C371 are disulfide-bonded. N-linked (GlcNAc...) asparagine; by host glycosylation is present at N358. A helical membrane pass occupies residues 393 to 413; that stretch reads ILLGILLGVAVIIIVVLLLYF. Over 414–421 the chain is Intravirion; the sequence is MVENGTRL. An N-linked (GlcNAc...) asparagine; by host glycan is attached at N417.

This sequence belongs to the influenza type C/coronaviruses hemagglutinin-esterase family. Homodimer; disulfide-linked. Forms a complex with the M protein in the pre-Golgi. Associates then with S-M complex to form a ternary complex S-M-HE. N-glycosylated in the host RER.

The protein resides in the virion membrane. The protein localises to the host cell membrane. The enzyme catalyses N-acetyl-9-O-acetylneuraminate + H2O = N-acetylneuraminate + acetate + H(+). It carries out the reaction N-acetyl-4-O-acetylneuraminate + H2O = N-acetylneuraminate + acetate + H(+). Its function is as follows. Structural protein that makes short spikes at the surface of the virus. Contains receptor binding and receptor-destroying activities. Mediates de-O-acetylation of N-acetyl-4-O-acetylneuraminic acid, which is probably the receptor determinant recognized by the virus on the surface of erythrocytes and susceptible cells. This receptor-destroying activity is important for virus release as it probably helps preventing self-aggregation and ensures the efficient spread of the progeny virus from cell to cell. May serve as a secondary viral attachment protein for initiating infection, the spike protein being the major one. May become a target for both the humoral and the cellular branches of the immune system. The polypeptide is Hemagglutinin-esterase (Bos taurus (Bovine)).